Reading from the N-terminus, the 491-residue chain is Ligand-gated ion channel 50 (491 aa).

The N-terminal stretch at 1–19 (MRFLLVLQLVFFYFSAATT) is a signal peptide. Asn-55 and Asn-101 each carry an N-linked (GlcNAc...) asparagine glycan. A disulfide bridge links Cys-157 with Cys-171. Transmembrane regions (helical) follow at residues 241-261 (LFQSYFPTSLTVISSWVGFFF), 265-287 (SVSARITLGVSSLLALTFQFGNV), and 302-322 (VWMIFSVIFIFCTLVELAIVC). Asn-418 carries an N-linked (GlcNAc...) asparagine glycan. The chain crosses the membrane as a helical span at residues 465–485 (MIMFPLSFLIFNVVYWSIYFM).

It belongs to the ligand-gated ion channel (TC 1.A.9) family.

It localises to the postsynaptic cell membrane. Its subcellular location is the cell membrane. The sequence is that of Ligand-gated ion channel 50 (lgc-50) from Caenorhabditis elegans.